The following is a 213-amino-acid chain: Phosphoribosyl-dephospho-CoA transferase (213 aa).

Residues aspartate 135 and aspartate 137 contribute to the active site.

The protein belongs to the MdcG family.

The catalysed reaction is apo-[malonate decarboxylase ACP] + 2'-(5''-triphospho-alpha-D-ribosyl)-3'-dephospho-CoA = holo-[malonate decarboxylase ACP] + diphosphate. In terms of biological role, transfers 2'-(5-triphosphoribosyl)-3'-dephosphocoenzyme-A to the apo-[acyl-carrier-protein] of the malonate decarboxylase to yield holo-[acyl-carrier-protein]. This chain is Phosphoribosyl-dephospho-CoA transferase, found in Xanthomonas axonopodis pv. citri (strain 306).